Here is a 457-residue protein sequence, read N- to C-terminus: Bifunctional protein GlmU (457 aa).

The tract at residues 1-228 (MEELVSVILA…SEEIIGVNSR (228 aa)) is pyrophosphorylase. UDP-N-acetyl-alpha-D-glucosamine contacts are provided by residues 9 to 12 (LAAG), lysine 23, glutamine 73, and 78 to 79 (GT). A Mg(2+)-binding site is contributed by aspartate 102. Positions 139, 154, 169, and 226 each coordinate UDP-N-acetyl-alpha-D-glucosamine. Asparagine 226 lines the Mg(2+) pocket. The linker stretch occupies residues 229–249 (VQLSNAEKVMRRRINEKHMEN). Residues 250–457 (GVTIIDPDST…VEERIKKGRL (208 aa)) form an N-acetyltransferase region. UDP-N-acetyl-alpha-D-glucosamine is bound by residues arginine 331 and lysine 349. Histidine 361 serves as the catalytic Proton acceptor. Residues tyrosine 364 and asparagine 375 each coordinate UDP-N-acetyl-alpha-D-glucosamine. Acetyl-CoA is bound by residues 384–385 (NY), alanine 421, and arginine 438.

It in the N-terminal section; belongs to the N-acetylglucosamine-1-phosphate uridyltransferase family. This sequence in the C-terminal section; belongs to the transferase hexapeptide repeat family. In terms of assembly, homotrimer. Mg(2+) is required as a cofactor.

It is found in the cytoplasm. The catalysed reaction is alpha-D-glucosamine 1-phosphate + acetyl-CoA = N-acetyl-alpha-D-glucosamine 1-phosphate + CoA + H(+). It carries out the reaction N-acetyl-alpha-D-glucosamine 1-phosphate + UTP + H(+) = UDP-N-acetyl-alpha-D-glucosamine + diphosphate. It functions in the pathway nucleotide-sugar biosynthesis; UDP-N-acetyl-alpha-D-glucosamine biosynthesis; N-acetyl-alpha-D-glucosamine 1-phosphate from alpha-D-glucosamine 6-phosphate (route II): step 2/2. The protein operates within nucleotide-sugar biosynthesis; UDP-N-acetyl-alpha-D-glucosamine biosynthesis; UDP-N-acetyl-alpha-D-glucosamine from N-acetyl-alpha-D-glucosamine 1-phosphate: step 1/1. Its pathway is bacterial outer membrane biogenesis; LPS lipid A biosynthesis. Functionally, catalyzes the last two sequential reactions in the de novo biosynthetic pathway for UDP-N-acetylglucosamine (UDP-GlcNAc). The C-terminal domain catalyzes the transfer of acetyl group from acetyl coenzyme A to glucosamine-1-phosphate (GlcN-1-P) to produce N-acetylglucosamine-1-phosphate (GlcNAc-1-P), which is converted into UDP-GlcNAc by the transfer of uridine 5-monophosphate (from uridine 5-triphosphate), a reaction catalyzed by the N-terminal domain. In Caldanaerobacter subterraneus subsp. tengcongensis (strain DSM 15242 / JCM 11007 / NBRC 100824 / MB4) (Thermoanaerobacter tengcongensis), this protein is Bifunctional protein GlmU.